Reading from the N-terminus, the 284-residue chain is Formamidopyrimidine-DNA glycosylase (284 aa).

The active-site Schiff-base intermediate with DNA is the P2. E3 (proton donor) is an active-site residue. K58 serves as the catalytic Proton donor; for beta-elimination activity. DNA contacts are provided by H101, R120, and R163. Residues 248-284 form an FPG-type zinc finger; sequence RVYDRENAPCVTAGCPDVVRRVVQSGRSSFYCPSCQR. The active-site Proton donor; for delta-elimination activity is the R274.

Belongs to the FPG family. As to quaternary structure, monomer. The cofactor is Zn(2+).

It carries out the reaction Hydrolysis of DNA containing ring-opened 7-methylguanine residues, releasing 2,6-diamino-4-hydroxy-5-(N-methyl)formamidopyrimidine.. The enzyme catalyses 2'-deoxyribonucleotide-(2'-deoxyribose 5'-phosphate)-2'-deoxyribonucleotide-DNA = a 3'-end 2'-deoxyribonucleotide-(2,3-dehydro-2,3-deoxyribose 5'-phosphate)-DNA + a 5'-end 5'-phospho-2'-deoxyribonucleoside-DNA + H(+). In terms of biological role, involved in base excision repair of DNA damaged by oxidation or by mutagenic agents. Acts as a DNA glycosylase that recognizes and removes damaged bases. Has a preference for oxidized purines, such as 7,8-dihydro-8-oxoguanine (8-oxoG). Has AP (apurinic/apyrimidinic) lyase activity and introduces nicks in the DNA strand. Cleaves the DNA backbone by beta-delta elimination to generate a single-strand break at the site of the removed base with both 3'- and 5'-phosphates. This chain is Formamidopyrimidine-DNA glycosylase, found in Dinoroseobacter shibae (strain DSM 16493 / NCIMB 14021 / DFL 12).